The sequence spans 383 residues: Methenyltetrahydrofolate synthase domain-containing protein (383 aa).

Residues 249-301 (AGKDVTLQGEHQHLPEPGCQQTVPLSVGRRPPDTPGPETNSMEAAPGSPPGEG) form a disordered region. One can recognise an RRM domain in the interval 306–379 (ADVYVGNLPG…DTLRVALARQ (74 aa)).

The polypeptide is Methenyltetrahydrofolate synthase domain-containing protein (MTHFSD) (Homo sapiens (Human)).